The primary structure comprises 166 residues: Phospholipase A2 inhibitor clone 02/03/06/07 (166 aa).

Positions 1-19 are cleaved as a signal peptide; it reads MRLILLSGLLLLGTFLANG. Residues 46–161 form the C-type lectin domain; the sequence is LKHAFLTVHK…CDDNLLVVCE (116 aa). 2 disulfide bridges follow: Cys83–Cys160 and Cys138–Cys152. Asn122 carries an N-linked (GlcNAc...) asparagine glycan.

The protein belongs to the alpha-type phospholipase A2 inhibitor family. In terms of assembly, homotrimer; non-covalently linked. In terms of tissue distribution, expressed by the liver.

The protein localises to the secreted. In terms of biological role, this phospholipase A2 inhibitor binds directly phospholipase A2 in the presence or absence of calcium. This Lachesis muta muta (Bushmaster) protein is Phospholipase A2 inhibitor clone 02/03/06/07.